We begin with the raw amino-acid sequence, 493 residues long: Tripartite motif-containing protein 5 (493 aa).

A2 bears the N-acetylalanine mark. The RING-type zinc-finger motif lies at 15–59 (CPICLELLTQPLSLDCGHSFCQACLTANHKKSTLDKGERSCPVCR). S86 bears the Phosphoserine mark. The segment at 90-132 (QKVDHCARHGEKLLLFCKEDGKVICWLCERSQEHRGHHTFLTE) adopts a B box-type zinc-finger fold. Zn(2+) is bound by residues C95, H98, C117, and H123. Residues 131–223 (TEEVAQKYQV…LTKSETEMVQ (93 aa)) adopt a coiled-coil conformation. The interval 185 to 198 (FEQLRDILDWEESN) is required for interaction with GABARAP and for autophagy. In terms of domain architecture, B30.2/SPRY spans 281 to 493 (LKGMLEVFRE…VPMTLCSPSS (213 aa)).

It belongs to the TRIM/RBCC family. Can form homodimers and homotrimers. In addition to lower-order dimerization, also exhibits a higher-order multimerization and both low- and high-order multimerizations are essential for its restriction activity. Interacts with BTBD1 and BTBD2. Interacts with PSMC4, PSMC5, PSMD7 and HSPA8/HSC70. Interacts (via B30.2/SPRY domain) with HSPA1A/B. Interacts with PSMC2, MAP3K7/TAK1, TAB2 and TAB3. Interacts with SQSTM1. Interacts with TRIM6 and TRIM34. Interacts with ULK1 (phosphorylated form), GABARAP, GABARAPL1, GABARAPL2, MAP1LC3A, MAP1LC3C and BECN1. Post-translationally, degraded in a proteasome-independent fashion in the absence of viral infection but in a proteasome-dependent fashion following exposure to restriction sensitive virus. In terms of processing, autoubiquitinated in a RING finger- and UBE2D2-dependent manner. Monoubiquitinated by TRIM21. Deubiquitinated by Yersinia YopJ. Ubiquitination may not lead to proteasomal degradation.

It is found in the cytoplasm. Its subcellular location is the nucleus. It catalyses the reaction S-ubiquitinyl-[E2 ubiquitin-conjugating enzyme]-L-cysteine + [acceptor protein]-L-lysine = [E2 ubiquitin-conjugating enzyme]-L-cysteine + N(6)-ubiquitinyl-[acceptor protein]-L-lysine.. It functions in the pathway protein modification; protein ubiquitination. Functionally, capsid-specific restriction factor that prevents infection from non-host-adapted retroviruses. Blocks viral replication early in the life cycle, after viral entry but before reverse transcription. In addition to acting as a capsid-specific restriction factor, also acts as a pattern recognition receptor that activates innate immune signaling in response to the retroviral capsid lattice. Binding to the viral capsid triggers its E3 ubiquitin ligase activity, and in concert with the heterodimeric ubiquitin conjugating enzyme complex UBE2V1-UBE2N (also known as UBC13-UEV1A complex) generates 'Lys-63'-linked polyubiquitin chains, which in turn are catalysts in the autophosphorylation of the MAP3K7/TAK1 complex (includes TAK1, TAB2, and TAB3). Activation of the MAP3K7/TAK1 complex by autophosphorylation results in the induction and expression of NF-kappa-B and MAPK-responsive inflammatory genes, thereby leading to an innate immune response in the infected cell. Plays a role in regulating autophagy through activation of autophagy regulator BECN1 by causing its dissociation from its inhibitors BCL2 and TAB2. The protein is Tripartite motif-containing protein 5 (TRIM5) of Pongo pygmaeus (Bornean orangutan).